We begin with the raw amino-acid sequence, 364 residues long: tRNA-specific 2-thiouridylase MnmA 1 (364 aa).

Residues 11–18 and Phe37 contribute to the ATP site; that span reads GMSGGTDS. Cys96 acts as the Nucleophile in catalysis. Cys96 and Cys193 are joined by a disulfide. Residue Gly120 coordinates ATP. Residues 142–144 form an interaction with tRNA region; that stretch reads KDQ. The active-site Cysteine persulfide intermediate is Cys193. Positions 309 to 310 are interaction with tRNA; it reads RY.

It belongs to the MnmA/TRMU family.

The protein localises to the cytoplasm. The catalysed reaction is S-sulfanyl-L-cysteinyl-[protein] + uridine(34) in tRNA + AH2 + ATP = 2-thiouridine(34) in tRNA + L-cysteinyl-[protein] + A + AMP + diphosphate + H(+). In terms of biological role, catalyzes the 2-thiolation of uridine at the wobble position (U34) of tRNA, leading to the formation of s(2)U34. In Bacteroides fragilis (strain ATCC 25285 / DSM 2151 / CCUG 4856 / JCM 11019 / LMG 10263 / NCTC 9343 / Onslow / VPI 2553 / EN-2), this protein is tRNA-specific 2-thiouridylase MnmA 1.